The sequence spans 74 residues: Antimicrobial peptide AcrAP2 (74 aa).

The N-terminal stretch at 1–22 (MEIKYLLTVFLVLLIVSDHCQA) is a signal peptide. A Lysine amide modification is found at lysine 40. A propeptide spanning residues 46–74 (NLDGQIDRFRNFRKRDAELEELLSKLPIY) is cleaved from the precursor.

It belongs to the non-disulfide-bridged peptide (NDBP) superfamily. Short antimicrobial peptide (group 4) family. As to expression, expressed by the venom gland.

It localises to the secreted. The protein localises to the target cell membrane. Its function is as follows. Has antimicrobial activity against the Gram-positive bacteria S.aureus (MIC=8 uM) and the yeast C.albicans (MIC=16 uM). Causes hemolysis on horse erythrocytes (64 uM for 100% hemolysis). Minimum bactericidal concentrations have also been tested against S.aureus and is four-fold higher (MBC=32 uM). The polypeptide is Antimicrobial peptide AcrAP2 (Androctonus crassicauda (Arabian fat-tailed scorpion)).